The primary structure comprises 83 residues: MQFSKITLAIVLYALGTAALPTASRCAGAPGRDVAATRGAKLQAREEDKPTPQYRCDKCEKEFVKGNDFFNHGGRGHCKMSGY.

A signal peptide spans 1–19; the sequence is MQFSKITLAIVLYALGTAA. A C2H2-type zinc finger spans residues 54-77; the sequence is YRCDKCEKEFVKGNDFFNHGGRGH.

The protein resides in the secreted. The protein localises to the host nucleus. Functionally, probable secreted effector that translocates into the nuclei of host cells to reprogram the expression of targeted genes by binding on effector binding elements in rice. This is Host transcription reprogramming factor 9 from Pyricularia oryzae (strain 70-15 / ATCC MYA-4617 / FGSC 8958) (Rice blast fungus).